We begin with the raw amino-acid sequence, 333 residues long: Adenosine deaminase (333 aa).

The Zn(2+) site is built by H12 and H14. Substrate contacts are provided by H14, D16, and G170. Position 197 (H197) interacts with Zn(2+). Residue E200 is the Proton donor of the active site. D278 is a Zn(2+) binding site. D279 contacts substrate.

Belongs to the metallo-dependent hydrolases superfamily. Adenosine and AMP deaminases family. Adenosine deaminase subfamily. Zn(2+) serves as cofactor.

The enzyme catalyses adenosine + H2O + H(+) = inosine + NH4(+). It carries out the reaction 2'-deoxyadenosine + H2O + H(+) = 2'-deoxyinosine + NH4(+). Its function is as follows. Catalyzes the hydrolytic deamination of adenosine and 2-deoxyadenosine. This Salmonella paratyphi C (strain RKS4594) protein is Adenosine deaminase.